The following is a 594-amino-acid chain: Probable translation initiation factor IF-2 (594 aa).

The tr-type G domain occupies 3–220 (IRSPIVSVLG…MLMGLAQQYL (218 aa)). The segment at 12–19 (GHVDHGKT) is G1. 12-19 (GHVDHGKT) is a GTP binding site. Residues 37–41 (GITQH) are G2. Residues 76–79 (DTPG) form a G3 region. GTP is bound by residues 76–80 (DTPGH) and 130–133 (NKID). The tract at residues 130 to 133 (NKID) is G4. The G5 stretch occupies residues 198 to 200 (SAI).

Belongs to the TRAFAC class translation factor GTPase superfamily. Classic translation factor GTPase family. IF-2 subfamily.

In terms of biological role, function in general translation initiation by promoting the binding of the formylmethionine-tRNA to ribosomes. Seems to function along with eIF-2. This is Probable translation initiation factor IF-2 (infB) from Methanothermobacter thermautotrophicus (strain ATCC 29096 / DSM 1053 / JCM 10044 / NBRC 100330 / Delta H) (Methanobacterium thermoautotrophicum).